We begin with the raw amino-acid sequence, 866 residues long: Pentatricopeptide repeat-containing protein At1g15510, chloroplastic (866 aa).

The transit peptide at 1 to 52 (MASSAQSPHFYLNPGKSNSFQSKAYKQRNVNFYWNFGIRRLFLRKSQGLSVL) directs the protein to the chloroplast. 18 PPR repeats span residues 58 to 92 (STHF…RVAV), 93 to 123 (DEDV…ALSS), 128 to 158 (GVEL…MSER), 159 to 194 (NLFS…GVKP), 195 to 229 (DVYT…GYEL), 230 to 260 (DIDV…MPRR), 261 to 295 (DIIS…SVDP), 296 to 330 (DLMT…GFAV), 331 to 365 (DISV…DIVS), 366 to 396 (WTTM…SVKP), 397 to 431 (DEIT…RLIS), 432 to 466 (YVIV…NVIS), 467 to 493 (WTSI…MKMT), 497 to 531 (NAIT…GVGL), 532 to 561 (DDFL…SQKK), 562 to 596 (DVTS…RVRP), 597 to 631 (DEIT…GVTP), and 632 to 662 (NLKH…MPVT). A type E motif region spans residues 667–742 (VWGALLNACR…DAGCSWVEVK (76 aa)). Residues 743 to 773 (GKVHAFLSDDKYHPQTKEINTVLEGFYEKMS) form a type E(+) motif region. The tract at residues 774 to 866 (EVGLTKISES…FKDGECSCGD (93 aa)) is type DYW motif.

The protein belongs to the PPR family. PCMP-H subfamily.

The protein resides in the plastid. Its subcellular location is the chloroplast. In terms of biological role, regulates the RNA editing of the chloroplast transcript accD, and is essential for the early stages of chloroplast biogenesis. Required for the RNA editing of the chloroplast transcript ndhF. The polypeptide is Pentatricopeptide repeat-containing protein At1g15510, chloroplastic (PCMP-H73) (Arabidopsis thaliana (Mouse-ear cress)).